The sequence spans 687 residues: Polyphosphate kinase (687 aa).

Asn-45 is a binding site for ATP. Residues Arg-375 and Arg-405 each contribute to the Mg(2+) site. His-435 acts as the Phosphohistidine intermediate in catalysis. ATP contacts are provided by Tyr-472, Arg-568, and His-596.

It belongs to the polyphosphate kinase 1 (PPK1) family. Mg(2+) is required as a cofactor. In terms of processing, an intermediate of this reaction is the autophosphorylated ppk in which a phosphate is covalently linked to a histidine residue through a N-P bond.

It catalyses the reaction [phosphate](n) + ATP = [phosphate](n+1) + ADP. Functionally, catalyzes the reversible transfer of the terminal phosphate of ATP to form a long-chain polyphosphate (polyP). This chain is Polyphosphate kinase, found in Burkholderia multivorans (strain ATCC 17616 / 249).